We begin with the raw amino-acid sequence, 348 residues long: MQLSDFNYELPAALIAQHPLANRTDSRLLEVKADGLNHALLLDRQFKDILSLVKPGDLLVFNNTKVIPARLHGKKETGGIVELLIERISGEKQTWVQIRASKVLKTGSIVHIHNHAGETFSVEIIGYDGRFYEVSFPDNVFSLLERFGELPLPPYIEHQPDGEDAQRYQTVVAKNPGAVAAPTAGLHFDEAILQKIKNLGVNQATVTLHVGAGTFTPVREEDLSKHKMHYEWFSIPNETLQAIEATKENGGRVIAVGTTSLRALESQAASGQSGGETNLFITPGYQFKTVDCLLTNFHLPKSTLLMLVSAFAGMDHIRAAYQHAIEQKYRFFSYGDAMFLCRLENTKP.

Belongs to the QueA family. Monomer.

The protein localises to the cytoplasm. The catalysed reaction is 7-aminomethyl-7-carbaguanosine(34) in tRNA + S-adenosyl-L-methionine = epoxyqueuosine(34) in tRNA + adenine + L-methionine + 2 H(+). It functions in the pathway tRNA modification; tRNA-queuosine biosynthesis. In terms of biological role, transfers and isomerizes the ribose moiety from AdoMet to the 7-aminomethyl group of 7-deazaguanine (preQ1-tRNA) to give epoxyqueuosine (oQ-tRNA). The polypeptide is S-adenosylmethionine:tRNA ribosyltransferase-isomerase (Polynucleobacter necessarius subsp. necessarius (strain STIR1)).